Consider the following 614-residue polypeptide: Leucine aminopeptidase 2 (614 aa).

A peptide-binding positions include 139 to 141 (QCQ) and 271 to 276 (PYGGME). Zn(2+) is bound at residue His-300. Glu-301 functions as the Proton acceptor in the catalytic mechanism. The Zn(2+) site is built by His-304 and Glu-323. Tyr-385 (proton donor) is an active-site residue.

The protein belongs to the peptidase M1 family. It depends on Zn(2+) as a cofactor.

The protein resides in the cytoplasm. It localises to the nucleus. The enzyme catalyses an epoxide + H2O = an ethanediol. Its function is as follows. Aminopeptidase that preferentially cleaves di- and tripeptides. Also has low epoxide hydrolase activity (in vitro). Can hydrolyze the epoxide leukotriene LTA(4) but it forms preferentially 5,6-dihydroxy-7,9,11,14-eicosatetraenoic acid rather than the cytokine leukotriene B(4) as the product compared to the homologous mammalian enzyme (in vitro). This is Leucine aminopeptidase 2 from Aspergillus fumigatus (strain ATCC MYA-4609 / CBS 101355 / FGSC A1100 / Af293) (Neosartorya fumigata).